The primary structure comprises 1201 residues: MAGHLVKYGKHRTRRSYARIKEVLDLPNLIEIQTDSYQWFLDEGLREMFEDIMPIDDFAGKLSLEFVDYQLLEPKYTVEEAREHDANYSAPLHVTLRLTNHETGEIKSQDVFFGDFPLMTEQGTFIINGAERVIVSQLVRSPGVYFNEELDKNGRPSYGTTVIPNRGAWLELETDAKNVSYVRIDRTRKIPLTELVRALGYGSDDDIIDMLGETDSLMLTLEKDVHKNTDDSRVEESLKDIYERLRPGEPKTADSSRSLLTARFFDPKRYDFAPVGRYKVNKKLSMKTRLMDQTLAETLADPDTGEVIAQKDTVIDKNVMAKLSPYLERDDFKTVTYTPSDEAVVTNPMVLQVVKVYSQNDPEKVVNVIGNGNIDLKFKHIVPADIIASINYFFNLQEGLGSTDDIDHLGNRRIRSVGELLQNQFRIGLSRMERVVRERMSIQDAATVTPQQLINIRPVVASIKEFFGSSQLSQFMDQTNPLGELTHKRRLSALGPGGLTRDRAGYEVRDVHYTHYGRMCPIETPEGPNIGLINSLSSYAKVNRSGFIETPYRRVDWTTHKVTDKIDYLAADEEDQFVIAQANSPLNDDGSFVEDTVLARNKEENLETPIENVDYMDVSPKQVVAVATACIPFLENDDSNRALMGANMQRQAVPLLDPHAPLIGTGIEYKAAHDSGIALICRHEGTVEYVDAREVRVRRDDGSLDTYKLMKFRRSNGGKNYNQRPIVKVGDHVDNDEVLADGPAMEGGELALGQNPLVAFMTWNGYNFEDAIIINERLVREDVYTSIHIEEYESEARDTKLGPEEMTREIPNVGEDALKNLDEDGIIRIGAEVKDGDILVGKVTPKGVTELSAEERLLHAIFGEKAREVRDTSLRVPHGGGGIIQDVKIFTRENGDELSPGVNMMVRVYIAQKRKIQVGDKMAGRHGNKGTVSIVVPEEDMPYMPDGTPIDIMLSPMGVPSRMNIGQVLELHLGMAARKLGIHMATPVFDGAQDTDIWEAIREAGVDSDAKSIVYDGRTGEPFDKRVAVGVMHYMKLSHMVDDKIHARSIGPYSLVTQQPLGGKAQFGGQRFGEMEVWALEAYGAAYTLQEILTYKSDDVVGRVKTYEAIVKGEPIPKPGVPESFRVLVKELQALGLDMKVLDSEDKEIELRDMDDDDDEVVNVDALSKFKQQQDEKAADKAAKADAAKPSETTNAQQDNQ.

The disordered stretch occupies residues 1165-1201 (DALSKFKQQQDEKAADKAAKADAAKPSETTNAQQDNQ). The segment covering 1172-1189 (QQQDEKAADKAAKADAAK) has biased composition (basic and acidic residues). Residues 1191 to 1201 (SETTNAQQDNQ) show a composition bias toward polar residues.

The protein belongs to the RNA polymerase beta chain family. The RNAP catalytic core consists of 2 alpha, 1 beta, 1 beta' and 1 omega subunit. When a sigma factor is associated with the core the holoenzyme is formed, which can initiate transcription.

The enzyme catalyses RNA(n) + a ribonucleoside 5'-triphosphate = RNA(n+1) + diphosphate. In terms of biological role, DNA-dependent RNA polymerase catalyzes the transcription of DNA into RNA using the four ribonucleoside triphosphates as substrates. The chain is DNA-directed RNA polymerase subunit beta from Lactiplantibacillus plantarum (strain ATCC BAA-793 / NCIMB 8826 / WCFS1) (Lactobacillus plantarum).